The chain runs to 100 residues: Small ribosomal subunit protein uS14c (100 aa).

It belongs to the universal ribosomal protein uS14 family. In terms of assembly, part of the 30S ribosomal subunit.

It is found in the plastid. The protein resides in the chloroplast. Binds 16S rRNA, required for the assembly of 30S particles. The polypeptide is Small ribosomal subunit protein uS14c (Cucumis sativus (Cucumber)).